Reading from the N-terminus, the 487-residue chain is Glutamyl-tRNA(Gln) amidotransferase subunit A (487 aa).

Active-site charge relay system residues include lysine 79 and serine 154. Serine 178 serves as the catalytic Acyl-ester intermediate.

It belongs to the amidase family. GatA subfamily. As to quaternary structure, heterotrimer of A, B and C subunits.

It catalyses the reaction L-glutamyl-tRNA(Gln) + L-glutamine + ATP + H2O = L-glutaminyl-tRNA(Gln) + L-glutamate + ADP + phosphate + H(+). In terms of biological role, allows the formation of correctly charged Gln-tRNA(Gln) through the transamidation of misacylated Glu-tRNA(Gln) in organisms which lack glutaminyl-tRNA synthetase. The reaction takes place in the presence of glutamine and ATP through an activated gamma-phospho-Glu-tRNA(Gln). This chain is Glutamyl-tRNA(Gln) amidotransferase subunit A, found in Moorella thermoacetica (strain ATCC 39073 / JCM 9320).